Consider the following 182-residue polypeptide: Antigenic integral membrane glycoprotein (182 aa).

Residues 1–35 form the signal peptide; it reads MFSFHERMKKKHVTIRVYKHERILVFLFVLFISTT. 2 N-linked (GlcNAc...) asparagine glycosylation sites follow: N88 and N120. A helical transmembrane segment spans residues 162-180; that stretch reads EFLMSSCIVITLNLFIFMY. A lipid anchor (S-palmitoyl cysteine) is attached at C168.

The protein localises to the cell membrane. Functionally, major antigen in the surface tegument. The protein is Antigenic integral membrane glycoprotein of Schistosoma mansoni (Blood fluke).